A 383-amino-acid chain; its full sequence is Succinyl-diaminopimelate desuccinylase (383 aa).

Histidine 74 is a binding site for Zn(2+). The active site involves aspartate 76. Residue aspartate 107 participates in Zn(2+) binding. Residue glutamate 141 is the Proton acceptor of the active site. Zn(2+) contacts are provided by glutamate 142, glutamate 170, and histidine 356.

The protein belongs to the peptidase M20A family. DapE subfamily. In terms of assembly, homodimer. The cofactor is Zn(2+). Requires Co(2+) as cofactor.

It catalyses the reaction N-succinyl-(2S,6S)-2,6-diaminopimelate + H2O = (2S,6S)-2,6-diaminopimelate + succinate. The protein operates within amino-acid biosynthesis; L-lysine biosynthesis via DAP pathway; LL-2,6-diaminopimelate from (S)-tetrahydrodipicolinate (succinylase route): step 3/3. In terms of biological role, catalyzes the hydrolysis of N-succinyl-L,L-diaminopimelic acid (SDAP), forming succinate and LL-2,6-diaminopimelate (DAP), an intermediate involved in the bacterial biosynthesis of lysine and meso-diaminopimelic acid, an essential component of bacterial cell walls. This chain is Succinyl-diaminopimelate desuccinylase, found in Polynucleobacter necessarius subsp. necessarius (strain STIR1).